Here is a 1214-residue protein sequence, read N- to C-terminus: Protein charlatan (1214 aa).

Disordered stretches follow at residues 1–20 (MATL…QSSN), 213–238 (HVNQ…RQEH), and 250–284 (SANA…GGRK). Residues 258-276 (AQSTPTSAPSNSSGGSTSS) show a composition bias toward low complexity. 2 C2H2-type zinc fingers span residues 305–327 (YACT…ENIH) and 333–356 (FQCY…LRMH). 2 disordered regions span residues 367-397 (RRHV…NVTI) and 463-488 (PVAS…SGLL). Residues 473–485 (GSHGGNGNGGSGS) show a composition bias toward gly residues. 2 C2H2-type zinc fingers span residues 496 to 518 (FTCC…LNTH) and 522 to 545 (FVCL…LKVH). Disordered stretches follow at residues 741-790 (SASS…ATSP), 848-946 (NDED…SGPS), and 1062-1084 (LSTP…SNAS). Low complexity-rich tracts occupy residues 855 to 871 (QQHQ…QQQQ), 885 to 896 (NNNNNNNSNNNN), 923 to 946 (SPGT…SGPS), and 1071 to 1084 (KAAP…SNAS).

As to expression, expressed in the PNS and CNS. In early blastoderm stages, it is ubiquitously expressed, then, before stage 5, it disappears from the poles of the embryo and faint stripes are visible. At stage 5, it also accumulates in the dorsal region, cephalic furrow ectodermal patches between the tracheal pits, where neurons of the PNS appear. In older embryos (stage 15) a strong expression is mostly restricted to the central nervous system (CNS) and PNS. In PNS, the pattern suggests that expression occur in many of the neurons of the ventral, lateral and dorsal clusters of neurons. In third instar wing disks, it is expressed in rows of cells on either side of the prospective anterior wing margin and in groups of cells that coincide with proneural clusters of ac/sc expression. Also expressed independently of ac/sc in certain areas of the disk, such as the postnotum and posterior dorsal proximal wing. Expressed in the proneural clusters of the leg disks and in the eye/antenna disk.

Its subcellular location is the nucleus. Functionally, probable transcription factor involved in the development of the adult pattern of macrochaetae. Required for accumulation of achaete (ac) and scute (sc) in proneural clusters. Probably acts by binding to the proneural cluster-specific enhancers of the ac/sc complex and increasing enhancer efficiency, thereby acting as a stimulator of ac/sc expression in proneural clusters. Also required for correct development of the embryonic/larval peripheral nervous system (PNS). The chain is Protein charlatan (chn) from Drosophila melanogaster (Fruit fly).